Consider the following 472-residue polypeptide: Argininosuccinate lyase (472 aa).

It belongs to the lyase 1 family. Argininosuccinate lyase subfamily.

The protein localises to the cytoplasm. The catalysed reaction is 2-(N(omega)-L-arginino)succinate = fumarate + L-arginine. It functions in the pathway amino-acid biosynthesis; L-arginine biosynthesis; L-arginine from L-ornithine and carbamoyl phosphate: step 3/3. The polypeptide is Argininosuccinate lyase (Synechococcus sp. (strain CC9311)).